A 115-amino-acid chain; its full sequence is Holo-[acyl-carrier-protein] synthase (115 aa).

Mg(2+) is bound by residues aspartate 8 and glutamate 50.

This sequence belongs to the P-Pant transferase superfamily. AcpS family. Mg(2+) is required as a cofactor.

The protein localises to the cytoplasm. The enzyme catalyses apo-[ACP] + CoA = holo-[ACP] + adenosine 3',5'-bisphosphate + H(+). Its function is as follows. Transfers the 4'-phosphopantetheine moiety from coenzyme A to a Ser of acyl-carrier-protein. The protein is Holo-[acyl-carrier-protein] synthase of Renibacterium salmoninarum (strain ATCC 33209 / DSM 20767 / JCM 11484 / NBRC 15589 / NCIMB 2235).